The primary structure comprises 660 residues: Bifunctional polymyxin resistance protein ArnA (660 aa).

Residues 1–304 (MKTVVFAYHD…TLGLVQGSRL (304 aa)) are formyltransferase ArnAFT. (6R)-10-formyltetrahydrofolate is bound at residue 86–88 (HLI). His104 functions as the Proton donor; for formyltransferase activity in the catalytic mechanism. Residues Arg114 and 136–140 (VKRAD) each bind (6R)-10-formyltetrahydrofolate. A dehydrogenase ArnADH region spans residues 314 to 660 (RRTRVLILGV…RTVDLTDKPL (347 aa)). Residues Asp347 and 368 to 369 (DI) contribute to the NAD(+) site. UDP-alpha-D-glucuronate is bound by residues Ala393, Tyr398, and 432 to 433 (TS). Residue Glu434 is the Proton acceptor; for decarboxylase activity of the active site. UDP-alpha-D-glucuronate is bound by residues Arg460, Asn492, 526 to 535 (KLIDGGKQKR), and Tyr613. Residue Arg619 is the Proton donor; for decarboxylase activity of the active site.

In the N-terminal section; belongs to the Fmt family. UDP-L-Ara4N formyltransferase subfamily. This sequence in the C-terminal section; belongs to the NAD(P)-dependent epimerase/dehydratase family. UDP-glucuronic acid decarboxylase subfamily. As to quaternary structure, homohexamer, formed by a dimer of trimers.

It catalyses the reaction UDP-alpha-D-glucuronate + NAD(+) = UDP-beta-L-threo-pentopyranos-4-ulose + CO2 + NADH. The catalysed reaction is UDP-4-amino-4-deoxy-beta-L-arabinose + (6R)-10-formyltetrahydrofolate = UDP-4-deoxy-4-formamido-beta-L-arabinose + (6S)-5,6,7,8-tetrahydrofolate + H(+). Its pathway is nucleotide-sugar biosynthesis; UDP-4-deoxy-4-formamido-beta-L-arabinose biosynthesis; UDP-4-deoxy-4-formamido-beta-L-arabinose from UDP-alpha-D-glucuronate: step 1/3. The protein operates within nucleotide-sugar biosynthesis; UDP-4-deoxy-4-formamido-beta-L-arabinose biosynthesis; UDP-4-deoxy-4-formamido-beta-L-arabinose from UDP-alpha-D-glucuronate: step 3/3. It functions in the pathway bacterial outer membrane biogenesis; lipopolysaccharide biosynthesis. Its function is as follows. Bifunctional enzyme that catalyzes the oxidative decarboxylation of UDP-glucuronic acid (UDP-GlcUA) to UDP-4-keto-arabinose (UDP-Ara4O) and the addition of a formyl group to UDP-4-amino-4-deoxy-L-arabinose (UDP-L-Ara4N) to form UDP-L-4-formamido-arabinose (UDP-L-Ara4FN). The modified arabinose is attached to lipid A and is required for resistance to polymyxin and cationic antimicrobial peptides. This Escherichia coli O6:K15:H31 (strain 536 / UPEC) protein is Bifunctional polymyxin resistance protein ArnA.